A 495-amino-acid chain; its full sequence is Glycerol kinase (495 aa).

Thr11 is a binding site for ADP. 3 residues coordinate ATP: Thr11, Thr12, and Ser13. Thr11 is a sn-glycerol 3-phosphate binding site. Arg15 is a binding site for ADP. Arg81, Glu82, Tyr133, and Asp242 together coordinate sn-glycerol 3-phosphate. Residues Arg81, Glu82, Tyr133, Asp242, and Gln243 each coordinate glycerol. 2 residues coordinate ADP: Thr264 and Gly307. Positions 264, 307, 311, and 408 each coordinate ATP. Positions 408 and 412 each coordinate ADP.

The protein belongs to the FGGY kinase family.

The enzyme catalyses glycerol + ATP = sn-glycerol 3-phosphate + ADP + H(+). It functions in the pathway polyol metabolism; glycerol degradation via glycerol kinase pathway; sn-glycerol 3-phosphate from glycerol: step 1/1. Its activity is regulated as follows. Inhibited by fructose 1,6-bisphosphate (FBP). Functionally, key enzyme in the regulation of glycerol uptake and metabolism. Catalyzes the phosphorylation of glycerol to yield sn-glycerol 3-phosphate. In Acinetobacter baylyi (strain ATCC 33305 / BD413 / ADP1), this protein is Glycerol kinase.